Reading from the N-terminus, the 177-residue chain is Cytidylate kinase (177 aa).

7 to 15 (GSPGSGTTT) is a binding site for ATP.

The protein belongs to the cytidylate kinase family. Type 2 subfamily.

It is found in the cytoplasm. The catalysed reaction is CMP + ATP = CDP + ADP. It carries out the reaction dCMP + ATP = dCDP + ADP. The chain is Cytidylate kinase from Methanocorpusculum labreanum (strain ATCC 43576 / DSM 4855 / Z).